The chain runs to 394 residues: MQTTPVSRKTAWLRVLMLAIAAFIFNTTEFVPVGLLSDIGSSFSMQTAQVGLMLTIYAWVVALMSLPMMLLTRNVERRMLLMIIFVMFVASHALSSVAWDFTTLLISRIGIALSHAIFWSITASLAIRVAPQGKKTQALSMMATGTALAMVLGLPIGRMIGQLLGWRITFAVIGAVAFVTMLLLLKLLPKLPSEHTGSLKSVPMLFRRPALVALYLLIAITVTAHYTAYSYIEPFIQSVAGLSGGFTTFLLLIFGAAGIVGSVLFSIYGNKFPATFLLAAIGLITLSMMCLYVSATHTLAVSTLCVIWGIAVMVMGLAVQVRVLALAPDATDVAMSLLSGIYNIGIGAGALLGGQVSLHLNMASVGYVGGAIGILSLLWCAWSMKRHPQLRLNG.

12 consecutive transmembrane segments (helical) span residues 15–35 (VLML…PVGL), 50–70 (VGLM…PMML), 79–99 (MLLM…SVAW), 109–129 (IGIA…AIRV), 137–157 (QALS…LPIG), 168–188 (ITFA…LKLL), 209–229 (PALV…YTAY), 249–269 (FLLL…SIYG), 272–292 (FPAT…MCLY), 299–319 (LAVS…GLAV), 333–353 (VAMS…ALLG), and 362–382 (MASV…WCAW).

It belongs to the major facilitator superfamily. SotB (TC 2.A.1.2) family.

It is found in the cell inner membrane. Its function is as follows. Involved in the efflux of sugars. The physiological role may be the reduction of the intracellular concentration of toxic sugars or sugar metabolites. The protein is Probable sugar efflux transporter of Erwinia tasmaniensis (strain DSM 17950 / CFBP 7177 / CIP 109463 / NCPPB 4357 / Et1/99).